The primary structure comprises 298 residues: Lipoyl synthase (298 aa).

Residues Cys43, Cys48, Cys54, Cys69, Cys73, Cys76, and Ser280 each contribute to the [4Fe-4S] cluster site. One can recognise a Radical SAM core domain in the interval 55–269 (FSSGTATFLI…AACGRGMGIP (215 aa)).

This sequence belongs to the radical SAM superfamily. Lipoyl synthase family. The cofactor is [4Fe-4S] cluster.

The protein localises to the cytoplasm. It carries out the reaction [[Fe-S] cluster scaffold protein carrying a second [4Fe-4S](2+) cluster] + N(6)-octanoyl-L-lysyl-[protein] + 2 oxidized [2Fe-2S]-[ferredoxin] + 2 S-adenosyl-L-methionine + 4 H(+) = [[Fe-S] cluster scaffold protein] + N(6)-[(R)-dihydrolipoyl]-L-lysyl-[protein] + 4 Fe(3+) + 2 hydrogen sulfide + 2 5'-deoxyadenosine + 2 L-methionine + 2 reduced [2Fe-2S]-[ferredoxin]. The protein operates within protein modification; protein lipoylation via endogenous pathway; protein N(6)-(lipoyl)lysine from octanoyl-[acyl-carrier-protein]: step 2/2. Its function is as follows. Catalyzes the radical-mediated insertion of two sulfur atoms into the C-6 and C-8 positions of the octanoyl moiety bound to the lipoyl domains of lipoate-dependent enzymes, thereby converting the octanoylated domains into lipoylated derivatives. This Nitratidesulfovibrio vulgaris (strain ATCC 29579 / DSM 644 / CCUG 34227 / NCIMB 8303 / VKM B-1760 / Hildenborough) (Desulfovibrio vulgaris) protein is Lipoyl synthase.